A 136-amino-acid chain; its full sequence is Small ribosomal subunit protein uS9 (136 aa).

A compositionally biased stretch (basic and acidic residues) spans 103 to 116 (PLKTEGHLSRDPRA). A disordered region spans residues 103–136 (PLKTEGHLSRDPRAKERRKYGLKKARKAPQFSKR). Basic residues predominate over residues 117-136 (KERRKYGLKKARKAPQFSKR).

Belongs to the universal ribosomal protein uS9 family.

This is Small ribosomal subunit protein uS9 (rpsI) from Prochlorococcus marinus (strain SARG / CCMP1375 / SS120).